The following is a 105-amino-acid chain: Circadian clock oscillator protein KaiB1 (105 aa).

It belongs to the KaiB family. Homotetramer in solution and crystals formed by 2 dimers. Only elutes as a homotetramer in size exclusion chromatography, interacts with KaiC1 and KaiC3. The KaiABC complex composition changes during the circadian cycle to control KaiC phosphorylation. Complexes KaiC(6), KaiA(2-4):KaiC(6), KaiB(6):KaiC(6) and KaiC(6):KaiB(6):KaiA(12) are among the most important forms, many form cooperatively. Undergoes a major conformational rearrangment; in the free state forms homotetramers as a dimer of dimers. When bound to the CI domain of KaiC switches to a monomeric thioredoxin-fold (KaiB(fs)). KaiB(fs) binds CikA, leading it to dephosphorylate phospho-RpaA.

Functionally, key component of the KaiABC oscillator complex, which constitutes the main circadian regulator in cyanobacteria. Complex composition changes during the circadian cycle to control KaiC phosphorylation. KaiA stimulates KaiC autophosphorylation, while KaiB sequesters KaiA, leading to KaiC autodephosphorylation. Phospho-Ser-431 KaiC accumulation triggers binding of KaiB to form the KaiB(6):KaiC(6) complex, leading to changes in output regulators CikA and SasA. KaiB switches to a thioredoxin-like fold (KaiB(fs)) when bound to KaiC. KaiB(6):KaiC(6) formation exposes a site for KaiA binding that sequesters KaiA from KaiC, making the KaiC(6):KaiB(6):KaiA(12) complex that results in KaiC autodephosphorylation. In terms of biological role, component of the oscillator and circadian clock in this organism, enhances fitness in a rhythmic environment. The homotetramer reduces the ATPase activity of KaiC3 by 35%. Its function is as follows. A metamorphic protein which reversibly switches between an inactive tetrameric fold and a rare, thioredoxin-like monomeric fold (KaiB(fs)). KaiB(fs) binds phospho-KaiC, KaiA and CikA. KaiA and CikA compete for binding to KaiB(fs), and KaiB(fs) and SasA compete for binding to KaiC, thus the clock oscillator and output signal pathway are tightly coupled. This chain is Circadian clock oscillator protein KaiB1, found in Synechocystis sp. (strain ATCC 27184 / PCC 6803 / Kazusa).